The chain runs to 423 residues: Large ribosomal subunit protein mL37 (423 aa).

The transit peptide at 1–29 (MALASGPARRVLARPWGLGLEGCGVPRRG) directs the protein to the mitochondrion.

It belongs to the mitochondrion-specific ribosomal protein mL37 family. In terms of assembly, component of the mitochondrial ribosome large subunit (39S) which comprises a 16S rRNA and about 50 distinct proteins.

Its subcellular location is the mitochondrion. In Bos taurus (Bovine), this protein is Large ribosomal subunit protein mL37 (MRPL37).